The primary structure comprises 640 residues: Threonine--tRNA ligase (640 aa).

The 61-residue stretch at 1 to 61 (MPTITLPDGS…ACDADVTIIT (61 aa)) folds into the TGS domain. The interval 243-534 (DHRKIGKALD…LIEQYAGNMP (292 aa)) is catalytic. The Zn(2+) site is built by C334, H385, and H511.

The protein belongs to the class-II aminoacyl-tRNA synthetase family. In terms of assembly, homodimer. Requires Zn(2+) as cofactor.

It is found in the cytoplasm. The enzyme catalyses tRNA(Thr) + L-threonine + ATP = L-threonyl-tRNA(Thr) + AMP + diphosphate + H(+). Its function is as follows. Catalyzes the attachment of threonine to tRNA(Thr) in a two-step reaction: L-threonine is first activated by ATP to form Thr-AMP and then transferred to the acceptor end of tRNA(Thr). Also edits incorrectly charged L-seryl-tRNA(Thr). The sequence is that of Threonine--tRNA ligase from Dichelobacter nodosus (strain VCS1703A).